We begin with the raw amino-acid sequence, 362 residues long: Peptide chain release factor 2 (362 aa).

Gln250 bears the N5-methylglutamine mark.

The protein belongs to the prokaryotic/mitochondrial release factor family. Methylated by PrmC. Methylation increases the termination efficiency of RF2.

The protein localises to the cytoplasm. Functionally, peptide chain release factor 2 directs the termination of translation in response to the peptide chain termination codons UGA and UAA. This is Peptide chain release factor 2 from Clostridium perfringens (strain ATCC 13124 / DSM 756 / JCM 1290 / NCIMB 6125 / NCTC 8237 / Type A).